The chain runs to 113 residues: U10-theraphotoxin-Hs2a (113 aa).

An N-terminal signal peptide occupies residues Met1–Ala21. Positions Asp22–Arg67 are excised as a propeptide. 3 disulfide bridges follow: Cys68-Cys86, Cys75-Cys91, and Cys85-Cys106.

This sequence belongs to the neurotoxin 14 (magi-1) family. 02 (HWTX-XVIc) subfamily. Expressed by the venom gland.

It is found in the secreted. Probable ion channel inhibitor. This is U10-theraphotoxin-Hs2a from Cyriopagopus schmidti (Chinese bird spider).